The chain runs to 442 residues: CBL-interacting serine/threonine-protein kinase 14 (442 aa).

The Protein kinase domain occupies 22–276 (YEVGKLVGCG…IEEIIHDPWF (255 aa)). ATP-binding positions include 28 to 36 (VGCGAFAKV) and K51. The active-site Proton acceptor is D144. The segment at 162-191 (DFGLSALTDQIRPDGLLHTLCGTPAYVAPE) is activation loop. Position 166 is a phosphoserine (S166). At T180 the chain carries Phosphothreonine. In terms of domain architecture, NAF spans 305 to 329 (MGARRMNAFDIISGSPGFNLSGLFG). The tract at residues 335-365 (DRVERFVSAWTAERVVERLEEIVSAENLTVA) is PPI.

This sequence belongs to the protein kinase superfamily. CAMK Ser/Thr protein kinase family. SNF1 subfamily. Interacts with CBL2. Interacts with CBL3. Interacts with CBL8. Interacts with CBL9. Interacts with KIN10 and KIN11. The cofactor is Mn(2+). In terms of tissue distribution, predominant in roots, cauline leaves, and flowers. Ubiquitous with highest expression in 7-day-old seedlings and flower buds, followed by that in cauline leaves and young siliques.

The protein resides in the cytoplasm. The protein localises to the nucleus. The catalysed reaction is L-seryl-[protein] + ATP = O-phospho-L-seryl-[protein] + ADP + H(+). It catalyses the reaction L-threonyl-[protein] + ATP = O-phospho-L-threonyl-[protein] + ADP + H(+). Its function is as follows. CIPK serine-threonine protein kinases interact with CBL proteins. Binding of a CBL protein to the regulatory NAF domain of CIPK protein lead to the activation of the kinase in a calcium-dependent manner. The protein is CBL-interacting serine/threonine-protein kinase 14 (CIPK14) of Arabidopsis thaliana (Mouse-ear cress).